The primary structure comprises 208 residues: MWKWILTHCASAFPHLPGCCCCCFLLLFLVSSVPVTCQALGQDMVSPEATNSSSSSFSSPSSAGRHVRSYNHLQGDVRWRKLFSFTKYFLKIEKNGKVSGTKKENCPYSILEITSVEIGVVAVKAINSNYYLAMNKKGKLYGSKEFNNDCKLKERIEENGYNTYASFNWQHNGRQMYVALNGKGAPRRGQKTRRKNTSAHFLPMVVHS.

Residues 1–37 (MWKWILTHCASAFPHLPGCCCCCFLLLFLVSSVPVTC) form the signal peptide. N-linked (GlcNAc...) asparagine glycosylation is found at N51 and N196.

The protein belongs to the heparin-binding growth factors family. Interacts with FGFR1 and FGFR2. Interacts with FGFBP1.

It localises to the secreted. Plays an important role in the regulation of embryonic development, cell proliferation and cell differentiation. Required for normal branching morphogenesis. May play a role in wound healing. The chain is Fibroblast growth factor 10 (FGF10) from Homo sapiens (Human).